The chain runs to 328 residues: Methionyl-tRNA formyltransferase (328 aa).

Residue S121 to P124 coordinates (6S)-5,6,7,8-tetrahydrofolate.

This sequence belongs to the Fmt family.

The catalysed reaction is L-methionyl-tRNA(fMet) + (6R)-10-formyltetrahydrofolate = N-formyl-L-methionyl-tRNA(fMet) + (6S)-5,6,7,8-tetrahydrofolate + H(+). In terms of biological role, attaches a formyl group to the free amino group of methionyl-tRNA(fMet). The formyl group appears to play a dual role in the initiator identity of N-formylmethionyl-tRNA by promoting its recognition by IF2 and preventing the misappropriation of this tRNA by the elongation apparatus. The protein is Methionyl-tRNA formyltransferase of Burkholderia thailandensis (strain ATCC 700388 / DSM 13276 / CCUG 48851 / CIP 106301 / E264).